The chain runs to 251 residues: Imidazole glycerol phosphate synthase subunit HisF (251 aa).

Catalysis depends on residues aspartate 11 and aspartate 130.

It belongs to the HisA/HisF family. As to quaternary structure, heterodimer of HisH and HisF.

The protein resides in the cytoplasm. It carries out the reaction 5-[(5-phospho-1-deoxy-D-ribulos-1-ylimino)methylamino]-1-(5-phospho-beta-D-ribosyl)imidazole-4-carboxamide + L-glutamine = D-erythro-1-(imidazol-4-yl)glycerol 3-phosphate + 5-amino-1-(5-phospho-beta-D-ribosyl)imidazole-4-carboxamide + L-glutamate + H(+). Its pathway is amino-acid biosynthesis; L-histidine biosynthesis; L-histidine from 5-phospho-alpha-D-ribose 1-diphosphate: step 5/9. IGPS catalyzes the conversion of PRFAR and glutamine to IGP, AICAR and glutamate. The HisF subunit catalyzes the cyclization activity that produces IGP and AICAR from PRFAR using the ammonia provided by the HisH subunit. This Chlorobium phaeovibrioides (strain DSM 265 / 1930) (Prosthecochloris vibrioformis (strain DSM 265)) protein is Imidazole glycerol phosphate synthase subunit HisF.